The following is a 157-amino-acid chain: Phosphopantetheine adenylyltransferase (157 aa).

S8 contributes to the substrate binding site. ATP is bound by residues 8–9 (SF) and H16. Substrate-binding residues include K40, T72, and R86. ATP-binding positions include 87–89 (GLR), E97, and 122–128 (HSFLSSS).

Belongs to the bacterial CoaD family. In terms of assembly, homohexamer. The cofactor is Mg(2+).

The protein localises to the cytoplasm. It catalyses the reaction (R)-4'-phosphopantetheine + ATP + H(+) = 3'-dephospho-CoA + diphosphate. It functions in the pathway cofactor biosynthesis; coenzyme A biosynthesis; CoA from (R)-pantothenate: step 4/5. In terms of biological role, reversibly transfers an adenylyl group from ATP to 4'-phosphopantetheine, yielding dephospho-CoA (dPCoA) and pyrophosphate. The protein is Phosphopantetheine adenylyltransferase of Prochlorococcus marinus (strain MIT 9303).